Consider the following 510-residue polypeptide: Flavonoid 3',5'-hydroxylase (510 aa).

Cys447 is a heme binding site.

Belongs to the cytochrome P450 family. Heme serves as cofactor.

The enzyme catalyses a 3',5'-unsubstituted flavanone + 2 reduced [NADPH--hemoprotein reductase] + 2 O2 = a 3',5'-dihydroxyflavanone + 2 oxidized [NADPH--hemoprotein reductase] + 2 H2O + 2 H(+). It functions in the pathway pigment biosynthesis; anthocyanin biosynthesis. Functionally, catalyzes the 3'5'-hydroxylation of naringenin and eriodictyol to form 5,7,3,'4',5'-pentahydroxyflavanone and 3',5'-hydroxylation of dihydrokaempferol and dihydroquercetin to form dihydromyricetin. The polypeptide is Flavonoid 3',5'-hydroxylase (CYP75A5) (Eustoma exaltatum subsp. russellianum (Bluebells)).